The chain runs to 145 residues: MKVILIKDTKDGKANTIIDVSPGYATNFLFKNKLAEPLNSRTEKLLVKRKQQIEIEKQEKQEQIAKLKIEIEKLVLWFKLKGNKESVHGAITAKKIKKELEIKGIFVDKQAIQTSGISTFGTSFVDIKLSSQTIAKLKINITKDE.

It belongs to the bacterial ribosomal protein bL9 family.

In terms of biological role, binds to the 23S rRNA. This is Large ribosomal subunit protein bL9 from Mesomycoplasma hyopneumoniae (strain 7448) (Mycoplasma hyopneumoniae).